A 1827-amino-acid polypeptide reads, in one-letter code: Sucrase-isomaltase, intestinal (1827 aa).

The Cytoplasmic segment spans residues 2–12 (ARKKFSGLEIS). Ser7 is modified (phosphoserine; by PKA). The chain crosses the membrane as a helical; Signal-anchor for type II membrane protein span at residues 13 to 32 (LIVLFVIVTIIAIALIVVLA). The Lumenal segment spans residues 33–1827 (TKTPAVDEIS…LEEPIEINWS (1795 aa)). Positions 40–61 (EISDSTSTPATTRVTTNPSDSG) are disordered. Low complexity predominate over residues 45-55 (TSTPATTRVTT). Positions 61-110 (GKCPNVLNDPVNVRINCIPEQFPTEGICAQRGCCWRPWNDSLIPWCFFVD) constitute a P-type 1 domain. Disulfide bonds link Cys63–Cys94, Cys77–Cys93, and Cys88–Cys106. A glycan (N-linked (GlcNAc...) asparagine) is linked at Asn99. Positions 110–1007 (DNHGYNVQDM…DLQLNTANAR (898 aa)) are isomaltase. Sulfotyrosine occurs at positions 237 and 239. Residues Asp264 and Asp388 each contribute to the substrate site. A sulfotyrosine mark is found at Tyr391 and Tyr400. Residues Asn437 and Asn455 are each glycosylated (N-linked (GlcNAc...) asparagine). Catalysis depends on Asp505, which acts as the Nucleophile; for isomaltase activity. Cys520 and Cys545 are joined by a disulfide. A substrate-binding site is contributed by Arg588. Asp604 functions as the For isomaltase activity in the catalytic mechanism. Cys635 and Cys646 form a disulfide bridge. Position 662 (His662) interacts with substrate. Sulfotyrosine is present on residues Tyr667, Tyr763, and Tyr765. 4 N-linked (GlcNAc...) asparagine glycosylation sites follow: Asn823, Asn855, Asn904, and Asn926. A P-type 2 domain is found at 932-978 (NQIFSENERFNCYPDADLATEQKCTQRGCVWRTGSSLSKAPECYFPR). Positions 1008 to 1827 (IKLPSDPIST…LEEPIEINWS (820 aa)) are sucrase. 4 N-linked (GlcNAc...) asparagine glycosylation sites follow: Asn1235, Asn1303, Asn1340, and Asn1354. The active-site Nucleophile; for sucrase activity is the Asp1394. The active-site For sucrase activity is the Glu1397. An N-linked (GlcNAc...) asparagine glycan is attached at Asn1403. Residue Asp1500 is the Proton donor; for isomaltase activity of the active site. Residues Asn1535, Asn1572, Asn1675, Asn1748, Asn1763, and Asn1815 are each glycosylated (N-linked (GlcNAc...) asparagine).

The protein belongs to the glycosyl hydrolase 31 family. In terms of assembly, the resulting sucrase and isomaltase subunits stay associated with one another in a complex by non-covalent linkages. In terms of processing, the precursor is proteolytically cleaved when exposed to pancreatic proteases in the intestinal lumen. Sulfated. As to expression, expressed in the poorly differentiated crypt cells of the small intestine as well as in the mature villous cells. Expressed at very low levels in the colon.

The protein localises to the apical cell membrane. The catalysed reaction is Hydrolysis of sucrose and maltose by an alpha-D-glucosidase-type action.. It catalyses the reaction Hydrolysis of (1-&gt;6)-alpha-D-glucosidic linkages in some oligosaccharides produced from starch and glycogen by alpha-amylase, and in isomaltose.. Its function is as follows. Plays an important role in the final stage of carbohydrate digestion. Isomaltase activity is specific for both alpha-1,4- and alpha-1,6-oligosaccharides. The polypeptide is Sucrase-isomaltase, intestinal (SI) (Homo sapiens (Human)).